A 178-amino-acid polypeptide reads, in one-letter code: Mediator of RNA polymerase II transcription subunit 21 (178 aa).

A disordered region spans residues Asp36–Glu91. Residues Glu67–Ser85 are compositionally biased toward low complexity. Residues Asn128–Val169 are a coiled coil.

Belongs to the Mediator complex subunit 21 family. Component of the Mediator complex.

It is found in the nucleus. In terms of biological role, component of the Mediator complex, a coactivator involved in the regulated transcription of nearly all RNA polymerase II-dependent genes. Mediator functions as a bridge to convey information from gene-specific regulatory proteins to the basal RNA polymerase II transcription machinery. Mediator is recruited to promoters by direct interactions with regulatory proteins and serves as a scaffold for the assembly of a functional preinitiation complex with RNA polymerase II and the general transcription factors. The chain is Mediator of RNA polymerase II transcription subunit 21 (SRB7) from Candida albicans (strain SC5314 / ATCC MYA-2876) (Yeast).